Reading from the N-terminus, the 155-residue chain is Cathelicidin-1 (155 aa).

Residues 1 to 29 form the signal peptide; the sequence is METQRASLSLGRCSLWLLLLGLALPSASA. Glutamine 30 carries the pyrrolidone carboxylic acid modification. A propeptide spanning residues 30–143 is cleaved from the precursor; that stretch reads QVLSYREAVL…KQPWAPPQAA (114 aa). 3 disulfides stabilise this stretch: cysteine 85-cysteine 96, cysteine 107-cysteine 124, and cysteine 146-cysteine 154.

This sequence belongs to the cathelicidin family.

It is found in the secreted. Its function is as follows. Potent microbicidal activity; active against S.aureus and E.coli. The protein is Cathelicidin-1 (CATHL1A) of Ovis aries (Sheep).